The chain runs to 256 residues: Pimeloyl-[acyl-carrier protein] methyl ester esterase (256 aa).

The AB hydrolase-1 domain occupies 15 to 242 (HLVLLHGWGL…AAHAPFISHP (228 aa)). Residues Trp-22, 82-83 (SL), and 143-147 (FLALQ) each bind substrate. Residue Ser-82 is the Nucleophile of the active site. Catalysis depends on residues Asp-207 and His-235. His-235 is a binding site for substrate.

The protein belongs to the AB hydrolase superfamily. Carboxylesterase BioH family. Monomer.

It localises to the cytoplasm. The enzyme catalyses 6-carboxyhexanoyl-[ACP] methyl ester + H2O = 6-carboxyhexanoyl-[ACP] + methanol + H(+). Its pathway is cofactor biosynthesis; biotin biosynthesis. In terms of biological role, the physiological role of BioH is to remove the methyl group introduced by BioC when the pimeloyl moiety is complete. It allows to synthesize pimeloyl-ACP via the fatty acid synthetic pathway through the hydrolysis of the ester bonds of pimeloyl-ACP esters. The sequence is that of Pimeloyl-[acyl-carrier protein] methyl ester esterase from Citrobacter koseri (strain ATCC BAA-895 / CDC 4225-83 / SGSC4696).